The following is a 660-amino-acid chain: Bifunctional polymyxin resistance protein ArnA (660 aa).

The segment at 1-304 (MKAIVFAYHD…EMGIVTDVRV (304 aa)) is formyltransferase ArnAFT. Residue His-104 is the Proton donor; for formyltransferase activity of the active site. (6R)-10-formyltetrahydrofolate contacts are provided by residues Arg-114 and 136 to 140 (TAKAD). Residues 314–660 (RRQRVLILGV…RGAVEELGNK (347 aa)) are dehydrogenase ArnADH. NAD(+) contacts are provided by residues Asp-347 and 368 to 369 (DV). UDP-alpha-D-glucuronate is bound by residues Ala-393, Tyr-398, and 432–433 (TS). Catalysis depends on Glu-434, which acts as the Proton acceptor; for decarboxylase activity. UDP-alpha-D-glucuronate contacts are provided by residues Arg-460, Asn-492, 526 to 535 (KLVDGGEQKR), and Tyr-613. The active-site Proton donor; for decarboxylase activity is Arg-619.

In the N-terminal section; belongs to the Fmt family. UDP-L-Ara4N formyltransferase subfamily. It in the C-terminal section; belongs to the NAD(P)-dependent epimerase/dehydratase family. UDP-glucuronic acid decarboxylase subfamily. Homohexamer, formed by a dimer of trimers.

It carries out the reaction UDP-alpha-D-glucuronate + NAD(+) = UDP-beta-L-threo-pentopyranos-4-ulose + CO2 + NADH. The enzyme catalyses UDP-4-amino-4-deoxy-beta-L-arabinose + (6R)-10-formyltetrahydrofolate = UDP-4-deoxy-4-formamido-beta-L-arabinose + (6S)-5,6,7,8-tetrahydrofolate + H(+). It functions in the pathway nucleotide-sugar biosynthesis; UDP-4-deoxy-4-formamido-beta-L-arabinose biosynthesis; UDP-4-deoxy-4-formamido-beta-L-arabinose from UDP-alpha-D-glucuronate: step 1/3. It participates in nucleotide-sugar biosynthesis; UDP-4-deoxy-4-formamido-beta-L-arabinose biosynthesis; UDP-4-deoxy-4-formamido-beta-L-arabinose from UDP-alpha-D-glucuronate: step 3/3. The protein operates within bacterial outer membrane biogenesis; lipopolysaccharide biosynthesis. Functionally, bifunctional enzyme that catalyzes the oxidative decarboxylation of UDP-glucuronic acid (UDP-GlcUA) to UDP-4-keto-arabinose (UDP-Ara4O) and the addition of a formyl group to UDP-4-amino-4-deoxy-L-arabinose (UDP-L-Ara4N) to form UDP-L-4-formamido-arabinose (UDP-L-Ara4FN). The modified arabinose is attached to lipid A and is required for resistance to polymyxin and cationic antimicrobial peptides. The chain is Bifunctional polymyxin resistance protein ArnA from Proteus mirabilis (strain HI4320).